The chain runs to 82 residues: RNA-binding protein BPUM_0095 (82 aa).

It belongs to the eukaryotic ribosomal protein eL8 family.

The protein is RNA-binding protein BPUM_0095 of Bacillus pumilus (strain SAFR-032).